A 139-amino-acid chain; its full sequence is Putative pre-16S rRNA nuclease (139 aa).

This sequence belongs to the YqgF nuclease family.

The protein resides in the cytoplasm. Its function is as follows. Could be a nuclease involved in processing of the 5'-end of pre-16S rRNA. The sequence is that of Putative pre-16S rRNA nuclease from Streptococcus uberis (strain ATCC BAA-854 / 0140J).